The primary structure comprises 299 residues: ATP phosphoribosyltransferase (299 aa).

Belongs to the ATP phosphoribosyltransferase family. Long subfamily. Equilibrium between an active dimeric form, an inactive hexameric form and higher aggregates. Interconversion between the various forms is largely reversible and is influenced by the natural substrates and inhibitors of the enzyme. The cofactor is Mg(2+).

It is found in the cytoplasm. The catalysed reaction is 1-(5-phospho-beta-D-ribosyl)-ATP + diphosphate = 5-phospho-alpha-D-ribose 1-diphosphate + ATP. It participates in amino-acid biosynthesis; L-histidine biosynthesis; L-histidine from 5-phospho-alpha-D-ribose 1-diphosphate: step 1/9. Its activity is regulated as follows. Feedback inhibited by histidine. Catalyzes the condensation of ATP and 5-phosphoribose 1-diphosphate to form N'-(5'-phosphoribosyl)-ATP (PR-ATP). Has a crucial role in the pathway because the rate of histidine biosynthesis seems to be controlled primarily by regulation of HisG enzymatic activity. This is ATP phosphoribosyltransferase from Salmonella choleraesuis (strain SC-B67).